A 310-amino-acid polypeptide reads, in one-letter code: Tagatose-6-phosphate kinase (310 aa).

The protein belongs to the carbohydrate kinase PfkB family. LacC subfamily.

The enzyme catalyses D-tagatofuranose 6-phosphate + ATP = D-tagatofuranose 1,6-bisphosphate + ADP + H(+). The protein operates within carbohydrate metabolism; D-tagatose 6-phosphate degradation; D-glyceraldehyde 3-phosphate and glycerone phosphate from D-tagatose 6-phosphate: step 1/2. The polypeptide is Tagatose-6-phosphate kinase (Streptococcus agalactiae serotype Ia (strain ATCC 27591 / A909 / CDC SS700)).